The primary structure comprises 621 residues: MGLLSDPVRRRALARLVLRLNAPLCVLSYVAGIAWFLALVFPPLTQRTYMSENAMGSTMVEEQFAGGDRARAFARDFAAHRKKSGALPVAWLERTMRSVGLEVYTQSFSRKLPFPDETHERYMVSGTNVYGILRAPRAASTESLVLTVPCGSDSTNSQAVGLLLALAAHFRGQIYWAKDIVFLVTEHDLLGTEAWLEAYHDVNVTGMQSSPLQGRAGAIQAAVALELSSDVVTSLDVAVEGLNGQLPNLDLLNLFQTFCQKGGLLCTLQGKLQPEDWTSLDGPLQGLQTLLLMVLRQASGRPHGSHGLFLRYRVEALTLRGINSFRQYKYDLVAVGKALEGMFRKLNHLLERLHQSFFLYLLPGLSRFVSIGLYMPAVGFLLLVLGLKALELWMQLHEAGMGLEEPGGAPGPSVPLPPSQGVGLASLVAPLLISQAMGLALYVLPVLGQHVATQHFPVAEAEAVVLTLLAIYAAGLALPHNTHRVVSTQAPDRGWMALKLVALIYLALQLGCIALTNFSLGFLLATTMVPTAALAKPHGPRTLYAALLVLTSPAATLLGSLFLWRELQEAPLSLAEGWQLFLAALAQGVLEHHTYGALLFPLLSLGLYPCWLLFWNVLFWK.

The Cytoplasmic portion of the chain corresponds to 2–19 (GLLSDPVRRRALARLVLR). A helical membrane pass occupies residues 20–41 (LNAPLCVLSYVAGIAWFLALVF). The Lumenal portion of the chain corresponds to 42-370 (PPLTQRTYMS…LLPGLSRFVS (329 aa)). 2 residues coordinate a 2-acyl-6-[6-phosphoethanolamine-alpha-D-mannosyl-(1-&gt;2)-6-phosphoethanolamine-alpha-D-mannosyl-(1-&gt;6)-2-phosphoethanolamine-alpha-D-mannosyl-(1-&gt;4)-alpha-D-glucosaminyl]-1-(1-radyl,2-acyl-sn-glycero-3-phospho)-1D-myo-inositol: Y49 and S51. N203 is a glycosylation site (N-linked (GlcNAc...) asparagine). C259 and C266 form a disulfide bridge. Positions 354, 355, and 356 each coordinate a 2-acyl-6-[6-phosphoethanolamine-alpha-D-mannosyl-(1-&gt;2)-6-phosphoethanolamine-alpha-D-mannosyl-(1-&gt;6)-2-phosphoethanolamine-alpha-D-mannosyl-(1-&gt;4)-alpha-D-glucosaminyl]-1-(1-radyl,2-acyl-sn-glycero-3-phospho)-1D-myo-inositol. Q355 lines the Mg(2+) pocket. The helical transmembrane segment at 371–393 (IGLYMPAVGFLLLVLGLKALELW) threads the bilayer. Over 394–425 (MQLHEAGMGLEEPGGAPGPSVPLPPSQGVGLA) the chain is Cytoplasmic. A helical membrane pass occupies residues 426-450 (SLVAPLLISQAMGLALYVLPVLGQH). Topologically, residues 451–462 (VATQHFPVAEAE) are lumenal. A helical transmembrane segment spans residues 463-483 (AVVLTLLAIYAAGLALPHNTH). Over 484–495 (RVVSTQAPDRGW) the chain is Cytoplasmic. The next 2 membrane-spanning stretches (helical) occupy residues 496–519 (MALK…TNFS) and 520–536 (LGFL…ALAK). Residues 537-540 (PHGP) lie on the Cytoplasmic side of the membrane. The chain crosses the membrane as a helical span at residues 541–563 (RTLYAALLVLTSPAATLLGSLFL). Residues 564–597 (WRELQEAPLSLAEGWQLFLAALAQGVLEHHTYGA) lie on the Lumenal side of the membrane. A helical transmembrane segment spans residues 598–619 (LLFPLLSLGLYPCWLLFWNVLF). Topologically, residues 620–621 (WK) are cytoplasmic.

As to quaternary structure, heteropentamer. Part of the GPI-anchor transamidase complex, consisting of PIGK, PIGT, PIGS, PIGU and GAA1. Interacts with PIGK. Ubiquitously expressed in fetal and adult tissues. Expressed at higher levels in fetal tissues than adult tissues.

It is found in the endoplasmic reticulum membrane. It participates in glycolipid biosynthesis; glycosylphosphatidylinositol-anchor biosynthesis. In terms of biological role, component of the glycosylphosphatidylinositol-anchor (GPI-anchor) transamidase (GPI-T) complex that catalyzes the formation of the linkage between a proprotein and a GPI-anchor and participates in GPI anchored protein biosynthesis. Binds GPI-anchor. In Homo sapiens (Human), this protein is GPI-anchor transamidase component GPAA1.